Consider the following 126-residue polypeptide: Small ribosomal subunit protein uS13 (126 aa).

The segment at 96–126 (LPVRGQQTKTNARTRKGRRKGTVANKKKVSK) is disordered. Positions 107 to 126 (ARTRKGRRKGTVANKKKVSK) are enriched in basic residues.

It belongs to the universal ribosomal protein uS13 family. Part of the 30S ribosomal subunit. Forms a loose heterodimer with protein S19. Forms two bridges to the 50S subunit in the 70S ribosome.

In terms of biological role, located at the top of the head of the 30S subunit, it contacts several helices of the 16S rRNA. In the 70S ribosome it contacts the 23S rRNA (bridge B1a) and protein L5 of the 50S subunit (bridge B1b), connecting the 2 subunits; these bridges are implicated in subunit movement. Contacts the tRNAs in the A and P-sites. The protein is Small ribosomal subunit protein uS13 of Hydrogenobaculum sp. (strain Y04AAS1).